A 539-amino-acid polypeptide reads, in one-letter code: Chaperonin GroEL (539 aa).

ATP-binding positions include 29–32 (TLGP), 86–90 (DGTTT), glycine 413, 477–479 (DAL), and aspartate 493.

This sequence belongs to the chaperonin (HSP60) family. In terms of assembly, forms a cylinder of 14 subunits composed of two heptameric rings stacked back-to-back. Interacts with the co-chaperonin GroES.

It localises to the cytoplasm. The enzyme catalyses ATP + H2O + a folded polypeptide = ADP + phosphate + an unfolded polypeptide.. In terms of biological role, together with its co-chaperonin GroES, plays an essential role in assisting protein folding. The GroEL-GroES system forms a nano-cage that allows encapsulation of the non-native substrate proteins and provides a physical environment optimized to promote and accelerate protein folding. The polypeptide is Chaperonin GroEL (Clostridium perfringens (strain 13 / Type A)).